A 265-amino-acid chain; its full sequence is Energy-coupling factor transporter transmembrane protein EcfT (265 aa).

6 helical membrane passes run 29-49 (VMAFIAIVFLANNWLTYALMF), 63-83 (FLFFIKGLQPIFWLILITLLL), 94-114 (LVDLGLLQITTLGLANGAMMF), 117-137 (FVLIIFMTTLLTLTTSPIELT), 143-163 (ILAPFRLVHLPVHELALMLSI), and 243-263 (RFADTCLLISLAVLSGLLFWL).

This sequence belongs to the energy-coupling factor EcfT family. As to quaternary structure, forms a stable energy-coupling factor (ECF) transporter complex composed of 2 membrane-embedded substrate-binding proteins (S component), 2 ATP-binding proteins (A component) and 2 transmembrane proteins (T component). May be able to interact with more than 1 S component at a time.

The protein resides in the cell membrane. Functionally, transmembrane (T) component of an energy-coupling factor (ECF) ABC-transporter complex. Unlike classic ABC transporters this ECF transporter provides the energy necessary to transport a number of different substrates. In Listeria innocua serovar 6a (strain ATCC BAA-680 / CLIP 11262), this protein is Energy-coupling factor transporter transmembrane protein EcfT.